An 881-amino-acid chain; its full sequence is Alanine--tRNA ligase (881 aa).

Zn(2+) contacts are provided by histidine 564, histidine 568, cysteine 673, and histidine 677. The interval 848 to 867 is disordered; the sequence is GQGGGGRPDMAQAGGPDGDK.

It belongs to the class-II aminoacyl-tRNA synthetase family. Zn(2+) is required as a cofactor.

The protein resides in the cytoplasm. The catalysed reaction is tRNA(Ala) + L-alanine + ATP = L-alanyl-tRNA(Ala) + AMP + diphosphate. Catalyzes the attachment of alanine to tRNA(Ala) in a two-step reaction: alanine is first activated by ATP to form Ala-AMP and then transferred to the acceptor end of tRNA(Ala). Also edits incorrectly charged Ser-tRNA(Ala) and Gly-tRNA(Ala) via its editing domain. In Hyphomonas neptunium (strain ATCC 15444), this protein is Alanine--tRNA ligase.